A 311-amino-acid chain; its full sequence is Putative ribose-phosphate pyrophosphokinase 2 (311 aa).

ATP contacts are provided by residues 38–40 (DGE) and 97–98 (RQ). The Mg(2+) site is built by His131 and Asp171. Asp219 is a binding site for D-ribose 5-phosphate.

The protein belongs to the ribose-phosphate pyrophosphokinase family. Class I subfamily. Homohexamer. Mg(2+) serves as cofactor.

The protein resides in the cytoplasm. The catalysed reaction is D-ribose 5-phosphate + ATP = 5-phospho-alpha-D-ribose 1-diphosphate + AMP + H(+). The protein operates within metabolic intermediate biosynthesis; 5-phospho-alpha-D-ribose 1-diphosphate biosynthesis; 5-phospho-alpha-D-ribose 1-diphosphate from D-ribose 5-phosphate (route I): step 1/1. In terms of biological role, involved in the biosynthesis of the central metabolite phospho-alpha-D-ribosyl-1-pyrophosphate (PRPP) via the transfer of pyrophosphoryl group from ATP to 1-hydroxyl of ribose-5-phosphate (Rib-5-P). This Listeria monocytogenes serotype 4b (strain F2365) protein is Putative ribose-phosphate pyrophosphokinase 2.